The sequence spans 490 residues: 53 kDa membrane antigen A (490 aa).

A signal peptide spans 1-16 (MKKKLFFALLVLILSS). The N-palmitoyl cysteine moiety is linked to residue cysteine 17. Cysteine 17 carries the S-diacylglycerol cysteine lipid modification.

It localises to the cell membrane. This is 53 kDa membrane antigen A (tdpA) from Treponema denticola.